The primary structure comprises 306 residues: Ribonucleoside-diphosphate reductase small subunit (306 aa).

Fe cation contacts are provided by D66, E96, and H99. Y103 is an active-site residue. The helical transmembrane segment at 153-173 threads the bilayer; it reads ILMILIEGIFFVSSFAAIAYL. Residues E159, E193, and H196 each contribute to the Fe cation site.

Belongs to the ribonucleoside diphosphate reductase small chain family. In terms of assembly, heterotetramer composed of a homodimer of the large subunit (R1) and a homodimer of the small subunit (R2). Larger multisubunit protein complex are also active, composed of (R1)n(R2)n. Fe cation is required as a cofactor.

The protein resides in the host membrane. The catalysed reaction is a 2'-deoxyribonucleoside 5'-diphosphate + [thioredoxin]-disulfide + H2O = a ribonucleoside 5'-diphosphate + [thioredoxin]-dithiol. Functionally, ribonucleoside-diphosphate reductase holoenzyme provides the precursors necessary for viral DNA synthesis. Allows virus growth in non-dividing cells, as well as reactivation from latency in infected hosts. Catalyzes the biosynthesis of deoxyribonucleotides from the corresponding ribonucleotides. The chain is Ribonucleoside-diphosphate reductase small subunit from Varicella-zoster virus (strain Dumas) (HHV-3).